A 349-amino-acid polypeptide reads, in one-letter code: Holliday junction branch migration complex subunit RuvB (349 aa).

Positions 1–181 (MDDRILTSVN…FGVLCPMEFY (181 aa)) are large ATPase domain (RuvB-L). ATP contacts are provided by residues L20, R21, G62, K65, T66, T67, 128–130 (EDY), R171, Y181, and R218. Mg(2+) is bound at residue T66. A small ATPAse domain (RuvB-S) region spans residues 182–252 (NDEELKEIIV…SAKKALNLLE (71 aa)). The head domain (RuvB-H) stretch occupies residues 255 to 349 (DEGFDSIDNK…DQCSFFKKEK (95 aa)). Positions 310 and 315 each coordinate DNA.

The protein belongs to the RuvB family. Homohexamer. Forms an RuvA(8)-RuvB(12)-Holliday junction (HJ) complex. HJ DNA is sandwiched between 2 RuvA tetramers; dsDNA enters through RuvA and exits via RuvB. An RuvB hexamer assembles on each DNA strand where it exits the tetramer. Each RuvB hexamer is contacted by two RuvA subunits (via domain III) on 2 adjacent RuvB subunits; this complex drives branch migration. In the full resolvosome a probable DNA-RuvA(4)-RuvB(12)-RuvC(2) complex forms which resolves the HJ.

Its subcellular location is the cytoplasm. The enzyme catalyses ATP + H2O = ADP + phosphate + H(+). Its function is as follows. The RuvA-RuvB-RuvC complex processes Holliday junction (HJ) DNA during genetic recombination and DNA repair, while the RuvA-RuvB complex plays an important role in the rescue of blocked DNA replication forks via replication fork reversal (RFR). RuvA specifically binds to HJ cruciform DNA, conferring on it an open structure. The RuvB hexamer acts as an ATP-dependent pump, pulling dsDNA into and through the RuvAB complex. RuvB forms 2 homohexamers on either side of HJ DNA bound by 1 or 2 RuvA tetramers; 4 subunits per hexamer contact DNA at a time. Coordinated motions by a converter formed by DNA-disengaged RuvB subunits stimulates ATP hydrolysis and nucleotide exchange. Immobilization of the converter enables RuvB to convert the ATP-contained energy into a lever motion, pulling 2 nucleotides of DNA out of the RuvA tetramer per ATP hydrolyzed, thus driving DNA branch migration. The RuvB motors rotate together with the DNA substrate, which together with the progressing nucleotide cycle form the mechanistic basis for DNA recombination by continuous HJ branch migration. Branch migration allows RuvC to scan DNA until it finds its consensus sequence, where it cleaves and resolves cruciform DNA. The protein is Holliday junction branch migration complex subunit RuvB of Clostridium acetobutylicum (strain ATCC 824 / DSM 792 / JCM 1419 / IAM 19013 / LMG 5710 / NBRC 13948 / NRRL B-527 / VKM B-1787 / 2291 / W).